A 289-amino-acid polypeptide reads, in one-letter code: ATP phosphoribosyltransferase (289 aa).

This sequence belongs to the ATP phosphoribosyltransferase family. Long subfamily. It depends on Mg(2+) as a cofactor.

The protein localises to the cytoplasm. The catalysed reaction is 1-(5-phospho-beta-D-ribosyl)-ATP + diphosphate = 5-phospho-alpha-D-ribose 1-diphosphate + ATP. It functions in the pathway amino-acid biosynthesis; L-histidine biosynthesis; L-histidine from 5-phospho-alpha-D-ribose 1-diphosphate: step 1/9. With respect to regulation, feedback inhibited by histidine. Catalyzes the condensation of ATP and 5-phosphoribose 1-diphosphate to form N'-(5'-phosphoribosyl)-ATP (PR-ATP). Has a crucial role in the pathway because the rate of histidine biosynthesis seems to be controlled primarily by regulation of HisG enzymatic activity. This is ATP phosphoribosyltransferase from Solibacter usitatus (strain Ellin6076).